Consider the following 120-residue polypeptide: uncharacterized protein (120 aa).

The RING-type zinc-finger motif lies at 70–109; that stretch reads CARCRRSLTLTPAVSCLPCGHSCLCTDCDQLFANVCFECK.

This is an uncharacterized protein from Orgyia pseudotsugata multicapsid polyhedrosis virus (OpMNPV).